Consider the following 415-residue polypeptide: Gamma-glutamyl phosphate reductase (415 aa).

The protein belongs to the gamma-glutamyl phosphate reductase family.

The protein localises to the cytoplasm. The enzyme catalyses L-glutamate 5-semialdehyde + phosphate + NADP(+) = L-glutamyl 5-phosphate + NADPH + H(+). The protein operates within amino-acid biosynthesis; L-proline biosynthesis; L-glutamate 5-semialdehyde from L-glutamate: step 2/2. Its function is as follows. Catalyzes the NADPH-dependent reduction of L-glutamate 5-phosphate into L-glutamate 5-semialdehyde and phosphate. The product spontaneously undergoes cyclization to form 1-pyrroline-5-carboxylate. The polypeptide is Gamma-glutamyl phosphate reductase (Lachnospira eligens (strain ATCC 27750 / DSM 3376 / VPI C15-48 / C15-B4) (Eubacterium eligens)).